The chain runs to 393 residues: Flavohemoprotein (393 aa).

Positions 1–139 (MLSNAQRALI…LADLLIEAEE (139 aa)) constitute a Globin domain. H85 contributes to the heme b binding site. Catalysis depends on charge relay system residues Y95 and E138. The interval 150–393 (GGWRGVRRFR…FFGPAAALDA (244 aa)) is reductase. The FAD-binding FR-type domain maps to 153 to 256 (RGVRRFRVAR…FPPAGDFVLR (104 aa)). FAD-binding positions include Y191 and 205-208 (RNYS). NADP(+) is bound at residue 268 to 273 (GVGITP). An FAD-binding site is contributed by 384–387 (FFGP).

Belongs to the globin family. Two-domain flavohemoproteins subfamily. It in the C-terminal section; belongs to the flavoprotein pyridine nucleotide cytochrome reductase family. Heme b serves as cofactor. It depends on FAD as a cofactor.

The enzyme catalyses 2 nitric oxide + NADPH + 2 O2 = 2 nitrate + NADP(+) + H(+). The catalysed reaction is 2 nitric oxide + NADH + 2 O2 = 2 nitrate + NAD(+) + H(+). Its function is as follows. Is involved in NO detoxification in an aerobic process, termed nitric oxide dioxygenase (NOD) reaction that utilizes O(2) and NAD(P)H to convert NO to nitrate, which protects the bacterium from various noxious nitrogen compounds. Therefore, plays a central role in the inducible response to nitrosative stress. The chain is Flavohemoprotein from Pseudomonas aeruginosa (strain ATCC 15692 / DSM 22644 / CIP 104116 / JCM 14847 / LMG 12228 / 1C / PRS 101 / PAO1).